We begin with the raw amino-acid sequence, 937 residues long: uncharacterized protein (937 aa).

Thr-2 bears the N-acetylthreonine mark. Residues 281–937 (NESPSSNINT…KKGKGKGGRK (657 aa)) form a disordered region. Positions 290-308 (TTTTSTTTTTTTTTSSPVV) are enriched in low complexity. Thr-292 (charge relay system) is an active-site residue. Composition is skewed to basic and acidic residues over residues 309-402 (EESK…EKQQ), 411-431 (AEKE…RLEA), 469-489 (AEKE…KLEA), 512-532 (AEKE…KLEA), 600-615 (AEKE…KLEA), 667-687 (AEKE…KLEA), 738-758 (AEKE…RLEA), and 780-872 (AEKE…KVEE). Residues 345 to 802 (VDDSKEKEEK…KAAEETKVEE (458 aa)) are a coiled coil. Acidic residues predominate over residues 887-897 (EETEEGEEVDE). Positions 898 to 924 (ASNTTTEQTTTNANQPKKPNNNNNNNK) are enriched in low complexity. The span at 925-937 (GKGKKGKGKGGRK) shows a compositional bias: basic residues.

It belongs to the AB hydrolase superfamily.

This is an uncharacterized protein from Dictyostelium discoideum (Social amoeba).